A 104-amino-acid polypeptide reads, in one-letter code: Iron-sulfur cluster assembly protein CyaY (104 aa).

This sequence belongs to the frataxin family.

In terms of biological role, involved in iron-sulfur (Fe-S) cluster assembly. May act as a regulator of Fe-S biogenesis. This is Iron-sulfur cluster assembly protein CyaY from Vibrio campbellii (strain ATCC BAA-1116).